The chain runs to 879 residues: Alanine--tRNA ligase (879 aa).

Zn(2+)-binding residues include His566, His570, Cys668, and His672.

This sequence belongs to the class-II aminoacyl-tRNA synthetase family. Zn(2+) serves as cofactor.

It is found in the cytoplasm. The catalysed reaction is tRNA(Ala) + L-alanine + ATP = L-alanyl-tRNA(Ala) + AMP + diphosphate. Its function is as follows. Catalyzes the attachment of alanine to tRNA(Ala) in a two-step reaction: alanine is first activated by ATP to form Ala-AMP and then transferred to the acceptor end of tRNA(Ala). Also edits incorrectly charged Ser-tRNA(Ala) and Gly-tRNA(Ala) via its editing domain. The chain is Alanine--tRNA ligase from Clostridium novyi (strain NT).